The chain runs to 537 residues: Chaperonin GroEL (537 aa).

Residues 29 to 32 (TLGP), 86 to 90 (DGTTT), G413, 477 to 479 (NAA), and D493 each bind ATP.

The protein belongs to the chaperonin (HSP60) family. Forms a cylinder of 14 subunits composed of two heptameric rings stacked back-to-back. Interacts with the co-chaperonin GroES.

It is found in the cytoplasm. It carries out the reaction ATP + H2O + a folded polypeptide = ADP + phosphate + an unfolded polypeptide.. In terms of biological role, together with its co-chaperonin GroES, plays an essential role in assisting protein folding. The GroEL-GroES system forms a nano-cage that allows encapsulation of the non-native substrate proteins and provides a physical environment optimized to promote and accelerate protein folding. In Bifidobacterium animalis subsp. lactis (strain AD011), this protein is Chaperonin GroEL.